Reading from the N-terminus, the 213-residue chain is Adenylate kinase (213 aa).

10-15 (GAGKGT) serves as a coordination point for ATP. The interval 30-59 (AVGDIFRTIIKTSTSEAELINNYVKQGALI) is NMP. Residues R36, 57–59 (ALI), 85–88 (GYPR), and Q92 each bind AMP. Positions 123-161 (GRYSCKNCGKIYNIHFLQPKIEHVCDVCSSSVFDYRKDD) are LID. R124 contributes to the ATP binding site. Residues C127 and C130 each contribute to the Zn(2+) site. 133–134 (IY) provides a ligand contact to ATP. Zn(2+)-binding residues include C147 and C150. Positions 158 and 169 each coordinate AMP. Position 197 (K197) interacts with ATP.

Belongs to the adenylate kinase family. As to quaternary structure, monomer.

The protein localises to the cytoplasm. The catalysed reaction is AMP + ATP = 2 ADP. The protein operates within purine metabolism; AMP biosynthesis via salvage pathway; AMP from ADP: step 1/1. Catalyzes the reversible transfer of the terminal phosphate group between ATP and AMP. Plays an important role in cellular energy homeostasis and in adenine nucleotide metabolism. This is Adenylate kinase from Rickettsia prowazekii (strain Madrid E).